The primary structure comprises 53 residues: Conotoxin-like peptide 1 (53 aa).

Positions 1–18 (MGVKSALFIMAVFAAANV) are cleaved as a signal peptide. Cystine bridges form between Cys-25/Cys-39, Cys-32/Cys-43, and Cys-38/Cys-50.

The protein resides in the secreted. In Orgyia pseudotsugata multicapsid polyhedrosis virus (OpMNPV), this protein is Conotoxin-like peptide 1 (CTL-1).